Reading from the N-terminus, the 156-residue chain is Ribosome maturation factor RimP (156 aa).

The protein belongs to the RimP family.

It localises to the cytoplasm. Functionally, required for maturation of 30S ribosomal subunits. The chain is Ribosome maturation factor RimP from Anoxybacillus flavithermus (strain DSM 21510 / WK1).